The following is a 157-amino-acid chain: NAD(P)H-quinone oxidoreductase subunit N (157 aa).

This sequence belongs to the complex I NdhN subunit family. NDH-1 can be composed of about 15 different subunits; different subcomplexes with different compositions have been identified which probably have different functions.

It is found in the cellular thylakoid membrane. It carries out the reaction a plastoquinone + NADH + (n+1) H(+)(in) = a plastoquinol + NAD(+) + n H(+)(out). The catalysed reaction is a plastoquinone + NADPH + (n+1) H(+)(in) = a plastoquinol + NADP(+) + n H(+)(out). In terms of biological role, NDH-1 shuttles electrons from an unknown electron donor, via FMN and iron-sulfur (Fe-S) centers, to quinones in the respiratory and/or the photosynthetic chain. The immediate electron acceptor for the enzyme in this species is believed to be plastoquinone. Couples the redox reaction to proton translocation, and thus conserves the redox energy in a proton gradient. Cyanobacterial NDH-1 also plays a role in inorganic carbon-concentration. The chain is NAD(P)H-quinone oxidoreductase subunit N from Synechococcus sp. (strain CC9902).